The following is a 281-amino-acid chain: Formamidopyrimidine-DNA glycosylase (281 aa).

Pro2 (schiff-base intermediate with DNA) is an active-site residue. The Proton donor role is filled by Glu3. Residue Lys58 is the Proton donor; for beta-elimination activity of the active site. DNA is bound by residues His94, Arg113, and Arg156. The segment at 241-281 (AVYDRVGQPCPGCDCDVARTGGIERMVQSGRSTFFCGRRQR) adopts an FPG-type; degenerate zinc-finger fold. Arg271 serves as the catalytic Proton donor; for delta-elimination activity.

It belongs to the FPG family. Monomer. Requires Zn(2+) as cofactor.

It carries out the reaction Hydrolysis of DNA containing ring-opened 7-methylguanine residues, releasing 2,6-diamino-4-hydroxy-5-(N-methyl)formamidopyrimidine.. The catalysed reaction is 2'-deoxyribonucleotide-(2'-deoxyribose 5'-phosphate)-2'-deoxyribonucleotide-DNA = a 3'-end 2'-deoxyribonucleotide-(2,3-dehydro-2,3-deoxyribose 5'-phosphate)-DNA + a 5'-end 5'-phospho-2'-deoxyribonucleoside-DNA + H(+). Involved in base excision repair of DNA damaged by oxidation or by mutagenic agents. Acts as a DNA glycosylase that recognizes and removes damaged bases. Has a preference for oxidized purines, such as 7,8-dihydro-8-oxoguanine (8-oxoG). Has AP (apurinic/apyrimidinic) lyase activity and introduces nicks in the DNA strand. Cleaves the DNA backbone by beta-delta elimination to generate a single-strand break at the site of the removed base with both 3'- and 5'-phosphates. This is Formamidopyrimidine-DNA glycosylase from Rhodospirillum rubrum (strain ATCC 11170 / ATH 1.1.1 / DSM 467 / LMG 4362 / NCIMB 8255 / S1).